The chain runs to 374 residues: F(420)H(2) dehydrogenase subunit D (374 aa).

The protein belongs to the complex I 49 kDa subunit family. As to quaternary structure, the FPO complex is composed of at least 13 different subunits.

It localises to the cell inner membrane. The enzyme catalyses methanophenazine + reduced coenzyme F420-(gamma-L-Glu)(n) = dihydromethanophenazine + oxidized coenzyme F420-(gamma-L-Glu)(n) + H(+). Its function is as follows. Component of the F(420)H(2) dehydrogenase (FPO complex) which is part of the energy-conserving F(420)H(2):heterodisulfide oxidoreductase system. The membrane-bound electron transfer system of the complex plays an important role in the metabolism of methylotrophic methanogens when the organisms grow on methanol or methylamines. Catalyzes the oxidation of methanophenazine to dihydromethanophenazine. It shuttles electrons from F(420)H(2), via FAD and iron-sulfur (Fe-S) centers, to methanophenazine (an electron carrier in the membrane). It couples the redox reaction to proton translocation (for every two electrons transferred, two hydrogen ions are translocated across the cytoplasmic membrane), and thus conserves the redox energy in a proton gradient. It also catalyzes the oxidation of F(420)H(2) with quinones such as 2,3-dimethyl-1,4-naphthoquinone, 2-methyl-1,4-naphthoquinone and tetramethyl-p-benzoquinone. This Methanosarcina mazei (strain ATCC BAA-159 / DSM 3647 / Goe1 / Go1 / JCM 11833 / OCM 88) (Methanosarcina frisia) protein is F(420)H(2) dehydrogenase subunit D (fpoD).